The following is a 127-amino-acid chain: Large ribosomal subunit protein bL12 (127 aa).

It belongs to the bacterial ribosomal protein bL12 family. In terms of assembly, homodimer. Part of the ribosomal stalk of the 50S ribosomal subunit. Forms a multimeric L10(L12)X complex, where L10 forms an elongated spine to which 2 to 4 L12 dimers bind in a sequential fashion. Binds GTP-bound translation factors.

Its function is as follows. Forms part of the ribosomal stalk which helps the ribosome interact with GTP-bound translation factors. Is thus essential for accurate translation. The chain is Large ribosomal subunit protein bL12 from Desulforapulum autotrophicum (strain ATCC 43914 / DSM 3382 / VKM B-1955 / HRM2) (Desulfobacterium autotrophicum).